The following is a 349-amino-acid chain: Quinone oxidoreductase-like protein 1 (349 aa).

It belongs to the zinc-containing alcohol dehydrogenase family. Quinone oxidoreductase subfamily. As to quaternary structure, homodimer. Component of the FERRY complex composed of five subunits, TBCK, PPP1R21, FERRY3, CRYZL1 and GATD1 with a ratio of 1:2:1:2:4, respectively. As to expression, ubiquitous.

It localises to the early endosome. Its function is as follows. Component of the FERRY complex (Five-subunit Endosomal Rab5 and RNA/ribosome intermediary). The FERRY complex directly interacts with mRNAs and RAB5A, and functions as a RAB5A effector involved in the localization and the distribution of specific mRNAs most likely by mediating their endosomal transport. The complex recruits mRNAs and ribosomes to early endosomes through direct mRNA-interaction. This is Quinone oxidoreductase-like protein 1 (CRYZL1) from Homo sapiens (Human).